Reading from the N-terminus, the 776-residue chain is Probable exo-1,4-beta-xylosidase bxlB (776 aa).

The first 23 residues, 1 to 23 (MVHLSPLLRPLAAFSFFTSLAST), serve as a signal peptide directing secretion. Asn-65 and Asn-105 each carry an N-linked (GlcNAc...) asparagine glycan. Asp-291 is a catalytic residue. N-linked (GlcNAc...) asparagine glycosylation is found at Asn-343, Asn-410, Asn-421, Asn-462, Asn-623, and Asn-766.

It belongs to the glycosyl hydrolase 3 family.

Its subcellular location is the secreted. The catalysed reaction is Hydrolysis of (1-&gt;4)-beta-D-xylans, to remove successive D-xylose residues from the non-reducing termini.. It participates in glycan degradation; xylan degradation. Functionally, xylan 1,4-beta-xylosidase involved in the hydrolysis of xylan, a major structural heterogeneous polysaccharide found in plant biomass representing the second most abundant polysaccharide in the biosphere, after cellulose. The polypeptide is Probable exo-1,4-beta-xylosidase bxlB (bxlB) (Aspergillus flavus (strain ATCC 200026 / FGSC A1120 / IAM 13836 / NRRL 3357 / JCM 12722 / SRRC 167)).